Consider the following 417-residue polypeptide: NADH-quinone oxidoreductase subunit D (417 aa).

It belongs to the complex I 49 kDa subunit family. NDH-1 is composed of 14 different subunits. Subunits NuoB, C, D, E, F, and G constitute the peripheral sector of the complex.

The protein resides in the cell inner membrane. It catalyses the reaction a quinone + NADH + 5 H(+)(in) = a quinol + NAD(+) + 4 H(+)(out). Its function is as follows. NDH-1 shuttles electrons from NADH, via FMN and iron-sulfur (Fe-S) centers, to quinones in the respiratory chain. The immediate electron acceptor for the enzyme in this species is believed to be ubiquinone. Couples the redox reaction to proton translocation (for every two electrons transferred, four hydrogen ions are translocated across the cytoplasmic membrane), and thus conserves the redox energy in a proton gradient. The sequence is that of NADH-quinone oxidoreductase subunit D from Aromatoleum aromaticum (strain DSM 19018 / LMG 30748 / EbN1) (Azoarcus sp. (strain EbN1)).